Here is a 266-residue protein sequence, read N- to C-terminus: UPF0354 protein lin1649 (266 aa).

The protein belongs to the UPF0354 family.

This Listeria innocua serovar 6a (strain ATCC BAA-680 / CLIP 11262) protein is UPF0354 protein lin1649.